Here is a 486-residue protein sequence, read N- to C-terminus: 2-hydroxymuconic semialdehyde dehydrogenase (486 aa).

Catalysis depends on residues Glu254 and Cys288.

Belongs to the aldehyde dehydrogenase family. As to quaternary structure, homodimer.

It catalyses the reaction (2Z,4E)-2-hydroxy-6-oxohexa-2,4-dienoate + NAD(+) + H2O = (2Z,4E)-2-hydroxyhexa-2,4-dienedioate + NADH + 2 H(+). The protein operates within aromatic compound metabolism; benzoate degradation via hydroxylation. 2-hydroxymuconic acid semialdehyde can be converted to 2-hydroxypent-2,4-dienoate either directly by the action of 2-hydroxymuconic semialdehyde hydrolase (HMSH) or by the action of three sequential enzymes, the first of which is HMSD. Can oxidize not only 2-hydroxymuconic semialdehyde and its analogs but also benzaldehyde and its analogs. The chain is 2-hydroxymuconic semialdehyde dehydrogenase (xylG) from Pseudomonas putida (Arthrobacter siderocapsulatus).